A 266-amino-acid chain; its full sequence is MRSFSGAVWERQVSLGAPSWPAAMGDRIYSLEARAVARSVLARPRRPRAPRPRLRLRGRPGRGRGGLLGAGPREACLATPGPPTPPCSSGTSQTPPAPGQMKSKERHLCSPSDHRRSRSPSQRRSRSRSSSWGRDRRHSDSLKESRHRRSSYSQSKSRSKSLPRQSTSLRQSRTPRRNSGSRGRSRSKSLPKRSKSMEKSQSRSPQKQTGSGAKSRPHGRHCDSIARSPCKSPRAYTSSGSKTQTTKHSHLRSHSRSRSYHHKNSW.

The tract at residues 42 to 266 (ARPRRPRAPR…SRSYHHKNSW (225 aa)) is disordered. Residues 43–62 (RPRRPRAPRPRLRLRGRPGR) are compositionally biased toward basic residues. Over residues 102–114 (KSKERHLCSPSDH) the composition is skewed to basic and acidic residues. Positions 115–127 (RRSRSPSQRRSRS) are enriched in basic residues. Residues 133–144 (GRDRRHSDSLKE) show a composition bias toward basic and acidic residues. Over residues 151–166 (SYSQSKSRSKSLPRQS) the composition is skewed to low complexity. Over residues 183 to 194 (GRSRSKSLPKRS) the composition is skewed to basic residues. Composition is skewed to polar residues over residues 202–212 (SRSPQKQTGSG) and 235–244 (AYTSSGSKTQ). Residues 245 to 266 (TTKHSHLRSHSRSRSYHHKNSW) are compositionally biased toward basic residues.

It belongs to the splicing factor SR family.

It localises to the nucleus. In terms of biological role, splicing factor that seems to antagonize SR proteins in pre-mRNA splicing regulation. In Mus musculus (Mouse), this protein is Serine/arginine-rich splicing factor 12 (Srsf12).